A 141-amino-acid polypeptide reads, in one-letter code: HTH-type transcriptional repressor NsrR (141 aa).

An HTH rrf2-type domain is found at 2–129; sequence QLTSFTDYGL…DNYTLADMVK (128 aa). Positions 28 to 51 form a DNA-binding region, H-T-H motif; that stretch reads ISQVTEVYGVSRNHMVKIINQLSR. Positions 91, 96, and 102 each coordinate [2Fe-2S] cluster.

The cofactor is [2Fe-2S] cluster.

Its function is as follows. Nitric oxide-sensitive repressor of genes involved in protecting the cell against nitrosative stress. May require iron for activity. This Yersinia pseudotuberculosis serotype O:1b (strain IP 31758) protein is HTH-type transcriptional repressor NsrR.